A 155-amino-acid polypeptide reads, in one-letter code: Protein E6 (155 aa).

Zinc fingers lie at residues 33-69 and 106-142; these read CVYC…CRVC and CYRC…CLQC.

The protein belongs to the papillomaviridae E6 protein family. In terms of assembly, forms homodimers. Interacts with ubiquitin-protein ligase UBE3A/E6-AP; this interaction stimulates UBE3A ubiquitin activity. Interacts with host TP53 and EP300; this interaction inhibits TP53 activity.

It is found in the host cytoplasm. The protein localises to the host nucleus. Functionally, plays a major role in the induction and maintenance of cellular transformation. E6 associates with host UBE3A/E6-AP ubiquitin-protein ligase and modulates its activity. Sequesters tumor suppressor TP53 in the host cytoplasm and modulates its activity by interacting with host EP300 that results in the reduction of TP53 acetylation and activation. In turn, apoptosis induced by DNA damage is inhibited. E6 also protects host keratinocytes from apoptosis by mediating the degradation of host BAK1. May also inhibit host immune response. This chain is Protein E6, found in Homo sapiens (Human).